The following is a 90-amino-acid chain: Small ribosomal subunit protein uS17 (90 aa).

This sequence belongs to the universal ribosomal protein uS17 family. As to quaternary structure, part of the 30S ribosomal subunit.

In terms of biological role, one of the primary rRNA binding proteins, it binds specifically to the 5'-end of 16S ribosomal RNA. The chain is Small ribosomal subunit protein uS17 from Burkholderia ambifaria (strain ATCC BAA-244 / DSM 16087 / CCUG 44356 / LMG 19182 / AMMD) (Burkholderia cepacia (strain AMMD)).